Here is a 628-residue protein sequence, read N- to C-terminus: Probable potassium transport system protein Kup (628 aa).

A run of 12 helical transmembrane segments spans residues 12-32 (ALPL…IGTS), 57-77 (LLSL…VMLV), 106-126 (WYLL…GVLT), 141-161 (ISPA…AAVF), 174-194 (FYGP…VYGI), 219-239 (LAGV…ALYA), 253-273 (WLFV…AILL), 295-315 (LLFL…TGVF), 343-363 (IYVG…VLGF), 369-389 (LASA…ILFV), 402-422 (AVIA…SANL), and 425-445 (LHEG…VMVS).

It belongs to the HAK/KUP transporter (TC 2.A.72) family.

Its subcellular location is the cell inner membrane. It catalyses the reaction K(+)(in) + H(+)(in) = K(+)(out) + H(+)(out). Functionally, transport of potassium into the cell. Likely operates as a K(+):H(+) symporter. This chain is Probable potassium transport system protein Kup, found in Azorhizobium caulinodans (strain ATCC 43989 / DSM 5975 / JCM 20966 / LMG 6465 / NBRC 14845 / NCIMB 13405 / ORS 571).